A 29-amino-acid polypeptide reads, in one-letter code: Dermaseptin-H7 (29 aa).

Position 29 is a leucine amide (L29).

Belongs to the frog skin active peptide (FSAP) family. Dermaseptin subfamily. Expressed by the skin glands.

It is found in the secreted. In terms of biological role, has antibacterial activity against the Gram-negative bacterium E.coli and the Gram-positive bacterium S.aureus. Has antiprotozoal activity against L.amazonensis. Has antifungal activity. Has no hemolytic activity. The protein is Dermaseptin-H7 of Pithecopus hypochondrialis (Orange-legged leaf frog).